The sequence spans 141 residues: Putative inactive deoxyuridine 5'-triphosphate nucleotidohydrolase-like protein FLJ16323 (141 aa).

The protein belongs to the dUTPase family.

This chain is Putative inactive deoxyuridine 5'-triphosphate nucleotidohydrolase-like protein FLJ16323, found in Homo sapiens (Human).